The sequence spans 257 residues: uncharacterized protein (257 aa).

Disordered stretches follow at residues 86–119 and 182–206; these read SDEE…RPLS and STPL…TDGQ. Over residues 196-206 the composition is skewed to polar residues; sequence PTPTSQLTDGQ.

This is an uncharacterized protein from Invertebrate iridescent virus 3 (IIV-3).